The sequence spans 710 residues: Interferon-induced GTP-binding protein Mx2 (710 aa).

The disordered stretch occupies residues 1–51 (MSMSFRPLKYKRHTQTSTQHHPKQDIYFHQQPPGPPLGQTMSPPQWQVEES). Residues 39 to 50 (QTMSPPQWQVEE) are compositionally biased toward polar residues. Positions 112-383 (DLALPAIAVI…LIWHINKSLP (272 aa)) constitute a Dynamin-type G domain. Positions 122 to 129 (GDQSSGKS) are G1 motif. 122 to 129 (GDQSSGKS) lines the GTP pocket. Positions 147–149 (ITR) are G2 motif. Residues 221-224 (DLPG) are G3 motif. GTP is bound by residues 221-225 (DLPGI) and 290-293 (TKPD). The tract at residues 290–293 (TKPD) is G4 motif. The tract at residues 322–325 (KCRG) is G5 motif. The GED domain maps to 619–710 (IVEIGVHLNA…ALYEFPHFKG (92 aa)).

Belongs to the TRAFAC class dynamin-like GTPase superfamily. Dynamin/Fzo/YdjA family.

It is found in the cytoplasm. Its subcellular location is the nucleus. Interferon-induced dynamin-like GTPase with antiviral activity against vesicular stomatitis virus (VSV). The chain is Interferon-induced GTP-binding protein Mx2 (MX2) from Bos taurus (Bovine).